The sequence spans 3147 residues: Probable polyketide synthase 1 (3147 aa).

A Ketosynthase family 3 (KS3) domain is found at 12-457 (SSDVAVIGVG…GSNCHLIIQE (446 aa)). Active-site for beta-ketoacyl synthase activity residues include C180 and H319. The interval 345-369 (QLNNFSTDGNDNDDDDDDNTSPEPL) is disordered. The segment covering 354 to 364 (NDNDDDDDDNT) has biased composition (acidic residues). Residue H380 is the For beta-ketoacyl synthase activity of the active site. The tract at residues 672-705 (GIYPSISVGHSFGEVSSYYLSGIISLETACKIVY) is acyl/malonyl transferase. S682 acts as the For acyl/malonyl transferase activity in catalysis. The N-terminal hotdog fold stretch occupies residues 976-1127 (NRLEGPTTSL…ATISLEQQQP (152 aa)). Positions 976–1298 (NRLEGPTTSL…IKSTNPKSTK (323 aa)) constitute a PKS/mFAS DH domain. H1014 serves as the catalytic Proton acceptor; for dehydratase activity. The interval 1149–1298 (DISKLDKFEL…IKSTNPKSTK (150 aa)) is C-terminal hotdog fold. Residue D1209 is the Proton donor; for dehydratase activity of the active site. A Carrier domain is found at 2568–2645 (SSNISLQDKI…SFLEKVNGLS (78 aa)). O-(pantetheine 4'-phosphoryl)serine is present on S2605. Positions 2723–2747 (PSLSQSDVLKTPPIKSLNNTKNSSL) are disordered. Residues 2738 to 2747 (SLNNTKNSSL) are compositionally biased toward polar residues. Residues 2789–3147 (VLGIGISVPG…FEGCFLKNVV (359 aa)) are chalcone synthase. C2930 is a catalytic residue.

The protein in the C-terminal section; belongs to the thiolase-like superfamily. Chalcone/stilbene synthases family. As to quaternary structure, homodimer. Pantetheine 4'-phosphate is required as a cofactor.

It carries out the reaction (E)-4-coumaroyl-CoA + 3 malonyl-CoA + 3 H(+) = 2',4,4',6'-tetrahydroxychalcone + 3 CO2 + 4 CoA. Its pathway is secondary metabolite biosynthesis; flavonoid biosynthesis. Functionally, probable polyketide synthase. Produces only acylpyrones; in vitro. The polypeptide is Probable polyketide synthase 1 (stlA) (Dictyostelium discoideum (Social amoeba)).